Consider the following 962-residue polypeptide: Glycine dehydrogenase (decarboxylating) (962 aa).

K709 is modified (N6-(pyridoxal phosphate)lysine).

Belongs to the GcvP family. The glycine cleavage system is composed of four proteins: P, T, L and H. It depends on pyridoxal 5'-phosphate as a cofactor.

It carries out the reaction N(6)-[(R)-lipoyl]-L-lysyl-[glycine-cleavage complex H protein] + glycine + H(+) = N(6)-[(R)-S(8)-aminomethyldihydrolipoyl]-L-lysyl-[glycine-cleavage complex H protein] + CO2. Functionally, the glycine cleavage system catalyzes the degradation of glycine. The P protein binds the alpha-amino group of glycine through its pyridoxal phosphate cofactor; CO(2) is released and the remaining methylamine moiety is then transferred to the lipoamide cofactor of the H protein. This is Glycine dehydrogenase (decarboxylating) from Shewanella putrefaciens (strain CN-32 / ATCC BAA-453).